Consider the following 241-residue polypeptide: Probable transcriptional regulatory protein Rpic_2388 (241 aa).

This sequence belongs to the TACO1 family.

The protein resides in the cytoplasm. The chain is Probable transcriptional regulatory protein Rpic_2388 from Ralstonia pickettii (strain 12J).